Consider the following 182-residue polypeptide: Adenine phosphoribosyltransferase (182 aa).

It belongs to the purine/pyrimidine phosphoribosyltransferase family. Homodimer.

The protein resides in the cytoplasm. It catalyses the reaction AMP + diphosphate = 5-phospho-alpha-D-ribose 1-diphosphate + adenine. Its pathway is purine metabolism; AMP biosynthesis via salvage pathway; AMP from adenine: step 1/1. Functionally, catalyzes a salvage reaction resulting in the formation of AMP, that is energically less costly than de novo synthesis. The chain is Adenine phosphoribosyltransferase from Koribacter versatilis (strain Ellin345).